The sequence spans 572 residues: MASTKIDDKVSIPGPVTGTGNSRFLIVSHENGGIWDLVRFGVWGNKESGDKFLHYSAGGGLLEEHLVRSDDSGGGDDRGGEVPDHRWVIFVSIIVRKLIAIFGKPMEWTGYLVEFFLNLFSLNGNFLGLLYNILHGKVVMPHRGSETFISAIGHLDGRINLYKSETLTKEIGEPDFWQKIGIGHRDLMDLCMMASKLAYENEKVVRNVVNLHWKMHFVDFYNCWNDFEKEMSTQVFLLCDKPKDANLILVSFRGTEPFDADDWITDFDYSWYEIPKLGKVHMGFLEALGLGNRTNASTFHEQLFVNNLKFANLENVHATIPPSESSKSSTSFSDSDAHTGSDLSSDSERPTDTRKKKFRLEIPERTAYYVVRSKLKRLLKEHKNAKFVVTGHSLGGALAILFPAVLVLHEEVDVMERLLGIYTYGQPRVGNRQLGRFMEAHLEHPVPKYFRVVYCNDLVPRLPYDNKTFLFKHFGICQYYNSLYIEQNINEEPNPNYFGMRFLVPLYLNAGWELIRSFTMGYMYGSEYEECWESVMLRALGLFLPGISAHSPVDYVNSIRLGKARSTQMSSF.

The chain crosses the membrane as a helical span at residues 110 to 130 (GYLVEFFLNLFSLNGNFLGLL). The segment at 320-356 (IPPSESSKSSTSFSDSDAHTGSDLSSDSERPTDTRKK) is disordered. Positions 323-334 (SESSKSSTSFSD) are enriched in low complexity. Residues 346 to 356 (DSERPTDTRKK) are compositionally biased toward basic and acidic residues. The GXSXG motif lies at 391–395 (GHSLG). Residue serine 393 is the Nucleophile of the active site. Catalysis depends on charge relay system residues aspartate 457 and histidine 550.

This sequence belongs to the AB hydrolase superfamily. Lipase family. As to expression, expressed in pollen grains and pollen tubes.

The protein localises to the lipid droplet. It is found in the membrane. The enzyme catalyses 1,2-di-(9Z-octadecenoyl)-glycerol + (9Z)-octadecenoate + H(+) = 1,2,3-tri-(9Z-octadecenoyl)-glycerol + H2O. It carries out the reaction 1-(9Z-octadecenoyl)-glycerol + H2O = glycerol + (9Z)-octadecenoate + H(+). Functionally, acid lipase that can hydrolyze a range of triacylglycerols without a clear preference for acyl-chains. Can also cleave 1,2-diacylglycerol, 1,3-diacylglycerol and 1-monoacylglycerol, but not phosphatidylcholine, phosphatidylethanolamine, or sterol esters. Required for pollen tube growth. Triacylglycerol hydrolysis by OBL1 may provide acyl groups for the synthesis of membrane lipids in growing pollen tubes. This Nicotiana tabacum (Common tobacco) protein is Triacylglycerol lipase OBL1.